The following is a 279-amino-acid chain: Undecaprenyl-diphosphatase (279 aa).

A run of 8 helical transmembrane segments spans residues 2–22, 44–64, 85–105, 113–133, 163–183, 188–208, 225–245, and 255–275; these read LFIELLKAIFFGVIEGVTEWL, AFMEMFNIVIQLGAIIAVIVI, WQLWLKVAIACIPSIIIAVPL, FNHMLPIAIALIVYGIAFLWI, VLSIIPGTSRSGATILGAIIL, TVAADFTFFLAIPTMFGYSGL, LLVLLVASLTAFAVSLYVIKL, and FTVFGRYRIVLGSLLIVYSVF.

The protein belongs to the UppP family.

It localises to the cell membrane. The enzyme catalyses di-trans,octa-cis-undecaprenyl diphosphate + H2O = di-trans,octa-cis-undecaprenyl phosphate + phosphate + H(+). Catalyzes the dephosphorylation of undecaprenyl diphosphate (UPP). Confers resistance to bacitracin. This chain is Undecaprenyl-diphosphatase, found in Streptococcus equi subsp. zooepidemicus (strain MGCS10565).